The following is a 368-amino-acid chain: Outer membrane protein assembly factor BamC (368 aa).

The first 18 residues, 1 to 18 (MTTKFFIGTAIAVSVLSA), serve as a signal peptide directing secretion. Cys-19 carries N-palmitoyl cysteine lipidation. Residue Cys-19 is the site of S-diacylglycerol cysteine attachment.

Belongs to the BamC family. As to quaternary structure, part of the Bam complex.

Its subcellular location is the cell outer membrane. Part of the outer membrane protein assembly complex, which is involved in assembly and insertion of beta-barrel proteins into the outer membrane. This Pseudoalteromonas atlantica (strain T6c / ATCC BAA-1087) protein is Outer membrane protein assembly factor BamC.